Reading from the N-terminus, the 201-residue chain is 3-isopropylmalate dehydratase small subunit (201 aa).

It belongs to the LeuD family. LeuD type 1 subfamily. In terms of assembly, heterodimer of LeuC and LeuD.

It catalyses the reaction (2R,3S)-3-isopropylmalate = (2S)-2-isopropylmalate. The protein operates within amino-acid biosynthesis; L-leucine biosynthesis; L-leucine from 3-methyl-2-oxobutanoate: step 2/4. In terms of biological role, catalyzes the isomerization between 2-isopropylmalate and 3-isopropylmalate, via the formation of 2-isopropylmaleate. This chain is 3-isopropylmalate dehydratase small subunit, found in Micrococcus luteus (strain ATCC 4698 / DSM 20030 / JCM 1464 / CCM 169 / CCUG 5858 / IAM 1056 / NBRC 3333 / NCIMB 9278 / NCTC 2665 / VKM Ac-2230) (Micrococcus lysodeikticus).